The following is a 372-amino-acid chain: Adaptive-response sensory kinase SasA (372 aa).

In terms of domain architecture, Histidine kinase spans 147–360 (MVAHELRTPL…CFHFTVPVWQ (214 aa)). Phosphohistidine; by autocatalysis is present on H150.

As to quaternary structure, homooligomerizes. Interacts with KaiC. Participates in the KaiBC complex, whose core is composed of a KaiC homohexamer and 6 KaiB.

It catalyses the reaction ATP + protein L-histidine = ADP + protein N-phospho-L-histidine.. Its function is as follows. Member of the two-component regulatory system SasA/RpaA involved in genome-wide circadian gene expression. One of several clock output pathways. Participates in the Kai clock protein complex, the main circadian regulator in cyanobacteria, via its interaction with KaiC. KaiC enhances the autophosphorylation activity of SasA, which then transfers its phosphate group to RpaA to activate it. In addition to its output function, recruits fold-shifted KaiB (KaiB(fs)) to KaiC to cooperatively form the KaiB(6):KaiC(6) complex (independent of SasA kinase activity). Required for robustness of the circadian rhythm of gene expression and is involved in clock output, also required for adaptation to light/dark cycles. This is Adaptive-response sensory kinase SasA from Prochlorococcus marinus (strain MIT 9215).